We begin with the raw amino-acid sequence, 57 residues long: Small ribosomal subunit protein bS21 (57 aa).

A disordered region spans residues 32 to 57 (VRKRKHFEKPSVKRKKKSEAARKRKF). Basic residues predominate over residues 33 to 57 (RKRKHFEKPSVKRKKKSEAARKRKF).

It belongs to the bacterial ribosomal protein bS21 family.

This chain is Small ribosomal subunit protein bS21, found in Shouchella clausii (strain KSM-K16) (Alkalihalobacillus clausii).